We begin with the raw amino-acid sequence, 61 residues long: MAKKSMIIKALRKPKYKTRQNNRCKLCGRPRGYLRDFCMCRICFRKYASEGLIPGVSKSSW.

Positions 24, 27, 40, and 43 each coordinate Zn(2+).

The protein belongs to the universal ribosomal protein uS14 family. Zinc-binding uS14 subfamily. Part of the 30S ribosomal subunit. Contacts proteins S3 and S10. It depends on Zn(2+) as a cofactor.

Binds 16S rRNA, required for the assembly of 30S particles and may also be responsible for determining the conformation of the 16S rRNA at the A site. This chain is Small ribosomal subunit protein uS14, found in Borreliella afzelii (strain PKo) (Borrelia afzelii).